The chain runs to 501 residues: Type II secretion system protein E (501 aa).

ATP is bound at residue 262–269; the sequence is GPTGSGKS. Residues Cys-395, Cys-398, Cys-428, and Cys-431 each contribute to the Zn(2+) site.

The protein belongs to the GSP E family. Forms homooligomers; most probably hexamers. Interacts with ExeL/GspL. Zn(2+) is required as a cofactor.

It is found in the cell inner membrane. It catalyses the reaction ATP + H2O + cellular proteinSide 1 = ADP + phosphate + cellular proteinSide 2.. Functionally, ATPase component of the type II secretion system required for the energy-dependent secretion of extracellular factors such as proteases and toxins from the periplasm. Acts as a molecular motor to provide the energy that is required for assembly of the pseudopilus and the extrusion of substrates generated in the cytoplasm. The sequence is that of Type II secretion system protein E (exeE) from Aeromonas hydrophila.